Reading from the N-terminus, the 276-residue chain is NAD(+)--dinitrogen-reductase ADP-D-ribosyltransferase (276 aa).

Monomer.

The catalysed reaction is L-arginyl-[dinitrogen reductase] + NAD(+) = N(omega)-alpha-(ADP-D-ribosyl)-L-arginyl-[dinitrogen reductase] + nicotinamide + H(+). Functionally, involved in the regulation of the nitrogen fixation activity by the reversible ADP-ribosylation of the dinitrogenase reductase component of the nitrogenase enzyme complex. The ADP-ribosyltransferase (DraT) transfers the ADP-ribose group from NAD to dinitrogenase reductase. The ADP-ribose group is removed through the action of the ADP-ribosylglycohydrolase (DraG). The sequence is that of NAD(+)--dinitrogen-reductase ADP-D-ribosyltransferase (draT) from Rhodospirillum rubrum.